The primary structure comprises 509 residues: Poly(A) RNA polymerase GLD2-A (509 aa).

The segment at 88–107 (PGSPSSSFQNRKRRSDEGNV) is disordered. Mg(2+) is bound by residues Asp240 and Asp242. The PAP-associated domain maps to 409 to 462 (LGDLLLGFLKYFAVEFDWSKDIISVREGKALPRSDDYLWRNKYICVEEPFDGTN).

The protein belongs to the DNA polymerase type-B-like family. GLD2 subfamily. In terms of assembly, component of a complex at least composed of cpeb1, cpsf1, tent2/gld2, pabpc1/ePAB, parn and sympk. Following oocyte maturation, parn is expelled from the complex. Interacts with rbfox2 and sympk. Requires Mg(2+) as cofactor. Mn(2+) is required as a cofactor.

It localises to the cytoplasm. The catalysed reaction is RNA(n) + ATP = RNA(n)-3'-adenine ribonucleotide + diphosphate. Its function is as follows. Cytoplasmic poly(A) RNA polymerase that adds successive AMP monomers to the 3'-end of specific RNAs, forming a poly(A) tail. In contrast to the canonical nuclear poly(A) RNA polymerase, it only adds poly(A) to selected cytoplasmic mRNAs during oocyte maturation. Plays a central role during oocyte maturation by mediating polyadenylation of dormant mRNAs, which contain 5'AAUAAA-3' sequence in their 3'UTR. In immature oocytes, polyadenylation of poly(A) tails is counteracted by the ribonuclease parn. During maturation parn is excluded from the ribonucleoprotein complex, allowing poly(A) elongation and activation of mRNAs. May not play a role in replication-dependent histone mRNA degradation. The protein is Poly(A) RNA polymerase GLD2-A (tent2-a) of Xenopus laevis (African clawed frog).